The following is a 163-amino-acid chain: SKP1-like protein 4 (163 aa).

Residues 105-163 (ILAANYLNIGGLLDLTCKAVADQMRGKTPEQMRAHFNIKNDYTPEEEAEVRNENKWAFE) are interaction with the F-box domain of F-box proteins.

It belongs to the SKP1 family. As to quaternary structure, part of a SCF (SKP1-cullin-F-box) protein ligase complex. Interacts with At1g56610, At1g67340, At3g62230, At3g59000, At4g27050, At1g55000, SKIP16 and SKIP32. Mostly expressed in inflorescence and siliques, and, to a lower extent, in seedlings, roots, and stems.

It is found in the nucleus. It participates in protein modification; protein ubiquitination. Functionally, involved in ubiquitination and subsequent proteasomal degradation of target proteins. Together with CUL1, RBX1 and a F-box protein, it forms a SCF E3 ubiquitin ligase complex. The functional specificity of this complex depends on the type of F-box protein. In the SCF complex, it serves as an adapter that links the F-box protein to CUL1. This is SKP1-like protein 4 (ASK4) from Arabidopsis thaliana (Mouse-ear cress).